The sequence spans 170 residues: Sec-independent protein translocase protein TatB (170 aa).

The chain crosses the membrane as a helical span at residues 1 to 21; sequence MIDLGISKLALIGAVALIVIG.

It belongs to the TatB family. As to quaternary structure, the Tat system comprises two distinct complexes: a TatABC complex, containing multiple copies of TatA, TatB and TatC subunits, and a separate TatA complex, containing only TatA subunits. Substrates initially bind to the TatABC complex, which probably triggers association of the separate TatA complex to form the active translocon.

Its subcellular location is the cell inner membrane. In terms of biological role, part of the twin-arginine translocation (Tat) system that transports large folded proteins containing a characteristic twin-arginine motif in their signal peptide across membranes. Together with TatC, TatB is part of a receptor directly interacting with Tat signal peptides. TatB may form an oligomeric binding site that transiently accommodates folded Tat precursor proteins before their translocation. This chain is Sec-independent protein translocase protein TatB, found in Cupriavidus necator (strain ATCC 17699 / DSM 428 / KCTC 22496 / NCIMB 10442 / H16 / Stanier 337) (Ralstonia eutropha).